A 256-amino-acid chain; its full sequence is Thiazole synthase (256 aa).

Residue K95 is the Schiff-base intermediate with DXP of the active site. 1-deoxy-D-xylulose 5-phosphate is bound by residues G156, 182–183 (AG), and 204–205 (NT).

It belongs to the ThiG family. In terms of assembly, homotetramer. Forms heterodimers with either ThiH or ThiS.

It is found in the cytoplasm. It carries out the reaction [ThiS sulfur-carrier protein]-C-terminal-Gly-aminoethanethioate + 2-iminoacetate + 1-deoxy-D-xylulose 5-phosphate = [ThiS sulfur-carrier protein]-C-terminal Gly-Gly + 2-[(2R,5Z)-2-carboxy-4-methylthiazol-5(2H)-ylidene]ethyl phosphate + 2 H2O + H(+). It participates in cofactor biosynthesis; thiamine diphosphate biosynthesis. Its function is as follows. Catalyzes the rearrangement of 1-deoxy-D-xylulose 5-phosphate (DXP) to produce the thiazole phosphate moiety of thiamine. Sulfur is provided by the thiocarboxylate moiety of the carrier protein ThiS. In vitro, sulfur can be provided by H(2)S. This is Thiazole synthase from Idiomarina loihiensis (strain ATCC BAA-735 / DSM 15497 / L2-TR).